The following is a 91-amino-acid chain: uncharacterized protein (91 aa).

3 helical membrane passes run 9–29, 30–50, and 67–87; these read LIHA…YTAG, LGIF…VIFG, and WLGC…VLKF.

It localises to the cell membrane. This is an uncharacterized protein from Methanocaldococcus jannaschii (strain ATCC 43067 / DSM 2661 / JAL-1 / JCM 10045 / NBRC 100440) (Methanococcus jannaschii).